The following is a 265-amino-acid chain: Small ribosomal subunit protein uS3 (265 aa).

The region spanning 39–107 (VRDFLKKKLK…PVHVNIEEIR (69 aa)) is the KH type-2 domain. The tract at residues 211–265 (NDAPVVEEPQDDRRRRPGRPEGRRREGEGRPGGNRRGGAGAGRRAAPGADAKSGE) is disordered. Residues 221–239 (DDRRRRPGRPEGRRREGEG) show a composition bias toward basic and acidic residues. Gly residues predominate over residues 240-251 (RPGGNRRGGAGA).

Belongs to the universal ribosomal protein uS3 family. In terms of assembly, part of the 30S ribosomal subunit. Forms a tight complex with proteins S10 and S14.

In terms of biological role, binds the lower part of the 30S subunit head. Binds mRNA in the 70S ribosome, positioning it for translation. This chain is Small ribosomal subunit protein uS3, found in Cupriavidus necator (strain ATCC 17699 / DSM 428 / KCTC 22496 / NCIMB 10442 / H16 / Stanier 337) (Ralstonia eutropha).